The following is an 886-amino-acid chain: Leucine-rich repeat-containing protein sog2 (886 aa).

6 LRR repeats span residues 28 to 49 (NALTLDLSHLNLRELPYEQLER), 53 to 74 (RIARLALGHNFIKSIGPEILKF), 76 to 97 (RLRYLNIRSNVLREFPESLCRL), 99 to 120 (SLEILDISRNKIKQLPESFGAL), 122 to 143 (NLKVLSISKNRLFELPTYIAHM), and 145 to 166 (NLEILKIENNHIVFPPPHIANN). 4 disordered regions span residues 236–288 (SPGM…THPP), 301–364 (SPRQ…ASPI), 394–431 (PTQLSASAKTSAISLPEVAKKERNRSNSTNDDYSSTRL), and 455–483 (RIFAQDPHPSPRLKKEETHENGSNLTNDS). The span at 243-277 (VTPSPHSHSPAGHQQSTPKSTLSKTNENSEGTLYD) shows a compositional bias: polar residues. A Phosphoserine modification is found at S301. Composition is skewed to polar residues over residues 312–347 (SLATGLNSPSVSKPPSSATGPLYHSPQSSLTNSSVA), 394–406 (PTQLSASAKTSAI), and 419–431 (SNSTNDDYSSTRL). At S464 the chain carries Phosphoserine.

It localises to the cytoplasm. The protein localises to the nucleus. This Schizosaccharomyces pombe (strain 972 / ATCC 24843) (Fission yeast) protein is Leucine-rich repeat-containing protein sog2.